The sequence spans 332 residues: Glycerol-3-phosphate dehydrogenase [NAD(P)+] (332 aa).

NADPH contacts are provided by Ser11, Phe12, Lys32, and Lys106. Lys106, Gly137, and Ser139 together coordinate sn-glycerol 3-phosphate. Ala141 is a binding site for NADPH. Positions 192, 245, 255, 256, and 257 each coordinate sn-glycerol 3-phosphate. The active-site Proton acceptor is Lys192. Position 256 (Arg256) interacts with NADPH. 2 residues coordinate NADPH: Val280 and Glu282.

Belongs to the NAD-dependent glycerol-3-phosphate dehydrogenase family.

The protein resides in the cytoplasm. The enzyme catalyses sn-glycerol 3-phosphate + NAD(+) = dihydroxyacetone phosphate + NADH + H(+). It carries out the reaction sn-glycerol 3-phosphate + NADP(+) = dihydroxyacetone phosphate + NADPH + H(+). It functions in the pathway membrane lipid metabolism; glycerophospholipid metabolism. Functionally, catalyzes the reduction of the glycolytic intermediate dihydroxyacetone phosphate (DHAP) to sn-glycerol 3-phosphate (G3P), the key precursor for phospholipid synthesis. This chain is Glycerol-3-phosphate dehydrogenase [NAD(P)+], found in Staphylococcus aureus (strain USA300).